A 187-amino-acid chain; its full sequence is Casparian strip membrane protein 1 (187 aa).

Over residues 1-10 (MKGSSEHGET) the composition is skewed to basic and acidic residues. Positions 1 to 20 (MKGSSEHGETSKQAPLGSSR) are disordered. The Cytoplasmic segment spans residues 1-27 (MKGSSEHGETSKQAPLGSSRGVSKGVS). The helical transmembrane segment at 28 to 48 (VLDLILRFIAIIGTLASAIAM) threads the bilayer. Over 49 to 75 (GTTNETLPFFTQFIRFKAQYSDLPTLT) the chain is Extracellular. Asn52 is a glycosylation site (N-linked (GlcNAc...) asparagine). The chain crosses the membrane as a helical span at residues 76 to 96 (FFVVANSIVCAYLTLSLPLSI). The Cytoplasmic portion of the chain corresponds to 97–115 (VHIIRSRAKYSRLLLVVLD). Residues 116–136 (AAMLALVTPGASAAAAIVYLA) traverse the membrane as a helical segment. Residues 137-162 (HKGNVRANWLAICQQFDSFCERISGC) are Extracellular-facing. The helical transmembrane segment at 163-183 (LIGSFGAMVMLVLLLLLSAIA) threads the bilayer. The Cytoplasmic segment spans residues 184-187 (LARR).

It belongs to the Casparian strip membrane proteins (CASP) family. As to quaternary structure, homodimer and heterodimers.

Its subcellular location is the cell membrane. Regulates membrane-cell wall junctions and localized cell wall deposition. Required for establishment of the Casparian strip membrane domain (CSD) and the subsequent formation of Casparian strips, a cell wall modification of the root endodermis that determines an apoplastic barrier between the intraorganismal apoplasm and the extraorganismal apoplasm and prevents lateral diffusion. This chain is Casparian strip membrane protein 1, found in Zea mays (Maize).